The following is a 217-amino-acid chain: Zinc finger CCHC-type and RNA-binding motif-containing protein 1 (217 aa).

The RRM domain occupies 10–88 (STVYVSNLPF…RVIKASIAID (79 aa)). A CCHC-type zinc finger spans residues 105–122 (SKCYECGESGHLSYACPK). The disordered stretch occupies residues 120 to 217 (CPKNMLGERE…YFSDEEELSD (98 aa)). Residues 145–163 (PEEEIEEVEESEDEGEDPA) are compositionally biased toward acidic residues. A phosphoserine mark is found at serine 155, serine 210, and serine 216.

Component of the U11/U12 snRNPs that are part of the U12-type spliceosome.

The protein resides in the nucleus. Its subcellular location is the nucleoplasm. The polypeptide is Zinc finger CCHC-type and RNA-binding motif-containing protein 1 (ZCRB1) (Homo sapiens (Human)).